The primary structure comprises 340 residues: N-acetyl-gamma-glutamyl-phosphate reductase (340 aa).

The active site involves cysteine 146.

It belongs to the NAGSA dehydrogenase family. Type 1 subfamily.

It localises to the cytoplasm. It catalyses the reaction N-acetyl-L-glutamate 5-semialdehyde + phosphate + NADP(+) = N-acetyl-L-glutamyl 5-phosphate + NADPH + H(+). The protein operates within amino-acid biosynthesis; L-arginine biosynthesis; N(2)-acetyl-L-ornithine from L-glutamate: step 3/4. Its function is as follows. Catalyzes the NADPH-dependent reduction of N-acetyl-5-glutamyl phosphate to yield N-acetyl-L-glutamate 5-semialdehyde. This chain is N-acetyl-gamma-glutamyl-phosphate reductase, found in Streptococcus thermophilus (strain ATCC BAA-491 / LMD-9).